A 207-amino-acid chain; its full sequence is Adenylyl-sulfate kinase (207 aa).

39-46 is a binding site for ATP; that stretch reads GLSGAGKS. Serine 113 functions as the Phosphoserine intermediate in the catalytic mechanism.

It belongs to the APS kinase family.

It catalyses the reaction adenosine 5'-phosphosulfate + ATP = 3'-phosphoadenylyl sulfate + ADP + H(+). The protein operates within sulfur metabolism; hydrogen sulfide biosynthesis; sulfite from sulfate: step 2/3. Functionally, catalyzes the synthesis of activated sulfate. The sequence is that of Adenylyl-sulfate kinase from Vibrio vulnificus (strain CMCP6).